Consider the following 432-residue polypeptide: Golgin subfamily A member 6-like protein 9 (432 aa).

Pro residues predominate over residues 1 to 11 (MWPQPRLPPHP). Disordered regions lie at residues 1–77 (MWPQ…YGEG) and 349–411 (KELE…AGGA). The segment covering 51–62 (NGSSPDTFTSGG) has biased composition (polar residues). Residues 157–354 (SKMEQLQDET…EQQVKELEKS (198 aa)) are a coiled coil. Positions 349–362 (KELEKSGGAEEPRG) are enriched in basic and acidic residues. The span at 366–381 (AAAARPVAGAPVPQGA) shows a compositional bias: low complexity.

The protein belongs to the GOLGA6 family.

This is Golgin subfamily A member 6-like protein 9 from Homo sapiens (Human).